Here is a 338-residue protein sequence, read N- to C-terminus: Fructose-1,6-bisphosphatase class 1 (338 aa).

Mg(2+) contacts are provided by E92, D114, L116, and D117. Residues 117–120 and N210 each bind substrate; that span reads DGSS. E284 is a binding site for Mg(2+).

The protein belongs to the FBPase class 1 family. Homotetramer. Mg(2+) serves as cofactor.

The protein resides in the cytoplasm. It carries out the reaction beta-D-fructose 1,6-bisphosphate + H2O = beta-D-fructose 6-phosphate + phosphate. It participates in carbohydrate biosynthesis; gluconeogenesis. In Halorhodospira halophila (strain DSM 244 / SL1) (Ectothiorhodospira halophila (strain DSM 244 / SL1)), this protein is Fructose-1,6-bisphosphatase class 1.